A 443-amino-acid polypeptide reads, in one-letter code: ATP-dependent protease ATPase subunit HslU (443 aa).

Residues I18, 60–65, D256, E321, and R393 each bind ATP; that span reads GVGKTE.

The protein belongs to the ClpX chaperone family. HslU subfamily. A double ring-shaped homohexamer of HslV is capped on each side by a ring-shaped HslU homohexamer. The assembly of the HslU/HslV complex is dependent on binding of ATP.

Its subcellular location is the cytoplasm. In terms of biological role, ATPase subunit of a proteasome-like degradation complex; this subunit has chaperone activity. The binding of ATP and its subsequent hydrolysis by HslU are essential for unfolding of protein substrates subsequently hydrolyzed by HslV. HslU recognizes the N-terminal part of its protein substrates and unfolds these before they are guided to HslV for hydrolysis. This is ATP-dependent protease ATPase subunit HslU from Escherichia coli O139:H28 (strain E24377A / ETEC).